The chain runs to 418 residues: Metal tolerance protein 1 (418 aa).

At 1–56 the chain is on the cytoplasmic side; it reads MDSHNSAPPQIAEVRMDISSSTSVAAGNKVCRGAACDFSDSSNSSKDARERMASMR. The chain crosses the membrane as a helical span at residues 57-77; sequence KLIIAVILCIIFMAVEVVGGI. Topologically, residues 78-89 are vacuolar; sequence KANSLAILTDAA. A helical membrane pass occupies residues 90-110; that stretch reads HLLSDVAAFAISLFSLWAAGW. At 111–122 the chain is on the cytoplasmic side; that stretch reads EATPQQSYGFFR. Residues 123–143 form a helical membrane-spanning segment; the sequence is IEILGALVSIQLIWLLAGILV. Residues 144 to 160 lie on the Vacuolar side of the membrane; that stretch reads YEAIVRLINESGEVQGS. A helical transmembrane segment spans residues 161-181; the sequence is LMFAVSAFGLFVNIIMAVLLG. Positions 182–246 are required for zinc-binding; sequence HDHGHGHGHG…HHPGTGHHHH (65 aa). Residues 182-282 lie on the Cytoplasmic side of the membrane; the sequence is HDHGHGHGHG…RRNINVHSAY (101 aa). The interval 186–248 is disordered; that stretch reads HGHGHGHGHG…PGTGHHHHDA (63 aa). Basic and acidic residues predominate over residues 196-227; sequence HSHDHDHGGSDHDHHHHEDQEHGHVHHHEDGH. The span at 235-245 shows a compositional bias: basic residues; sequence LHHHPGTGHHH. A helical transmembrane segment spans residues 283–303; the sequence is LHVLGDSIQSIGVMIGGAIIW. Topologically, residues 304–307 are vacuolar; the sequence is YKPE. Residues 308–328 traverse the membrane as a helical segment; the sequence is WKIIDLICTLIFSVIVLFTTI. Over 329 to 418 the chain is Cytoplasmic; sequence KMLRNILEVL…SHVTIQIERE (90 aa).

This sequence belongs to the cation diffusion facilitator (CDF) transporter (TC 2.A.4) family. SLC30A subfamily.

It is found in the vacuole membrane. In terms of biological role, involved in sequestration of excess zinc in the cytoplasm into vacuoles to maintain zinc homeostasis. This is Metal tolerance protein 1 (MTP1) from Oryza sativa subsp. japonica (Rice).